The primary structure comprises 179 residues: Large ribosomal subunit protein uL5 (179 aa).

This sequence belongs to the universal ribosomal protein uL5 family. Part of the 50S ribosomal subunit; part of the 5S rRNA/L5/L18/L25 subcomplex. Contacts the 5S rRNA and the P site tRNA. Forms a bridge to the 30S subunit in the 70S ribosome.

In terms of biological role, this is one of the proteins that bind and probably mediate the attachment of the 5S RNA into the large ribosomal subunit, where it forms part of the central protuberance. In the 70S ribosome it contacts protein S13 of the 30S subunit (bridge B1b), connecting the 2 subunits; this bridge is implicated in subunit movement. Contacts the P site tRNA; the 5S rRNA and some of its associated proteins might help stabilize positioning of ribosome-bound tRNAs. The protein is Large ribosomal subunit protein uL5 of Shewanella amazonensis (strain ATCC BAA-1098 / SB2B).